The sequence spans 254 residues: 3-deoxy-manno-octulosonate cytidylyltransferase (254 aa).

Belongs to the KdsB family.

It localises to the cytoplasm. It catalyses the reaction 3-deoxy-alpha-D-manno-oct-2-ulosonate + CTP = CMP-3-deoxy-beta-D-manno-octulosonate + diphosphate. It functions in the pathway nucleotide-sugar biosynthesis; CMP-3-deoxy-D-manno-octulosonate biosynthesis; CMP-3-deoxy-D-manno-octulosonate from 3-deoxy-D-manno-octulosonate and CTP: step 1/1. It participates in bacterial outer membrane biogenesis; lipopolysaccharide biosynthesis. Functionally, activates KDO (a required 8-carbon sugar) for incorporation into bacterial lipopolysaccharide in Gram-negative bacteria. The protein is 3-deoxy-manno-octulosonate cytidylyltransferase of Pseudomonas fluorescens (strain ATCC BAA-477 / NRRL B-23932 / Pf-5).